A 235-amino-acid chain; its full sequence is uncharacterized protein (235 aa).

Residues 1 to 98 (MDTKLSVTGA…NKKNTLHYSK (98 aa)) form a disordered region. Residues Lys16 and Lys35 each participate in a glycyl lysine isopeptide (Lys-Gly) (interchain with G-Cter in ubiquitin) cross-link. Residues 38 to 50 (NGNKKRNKNRNRN) are compositionally biased toward basic residues. Residues 51-60 (KKTETKEQNE) are compositionally biased toward basic and acidic residues.

This is an uncharacterized protein from Saccharomyces cerevisiae (strain ATCC 204508 / S288c) (Baker's yeast).